The following is a 252-amino-acid chain: Phosphoglycolate phosphatase (252 aa).

The active-site Nucleophile is Asp13. 3 residues coordinate Mg(2+): Asp13, Asp15, and Asp192.

Belongs to the HAD-like hydrolase superfamily. CbbY/CbbZ/Gph/YieH family. Monomer. Requires Mg(2+) as cofactor. It depends on chloride as a cofactor.

It catalyses the reaction 2-phosphoglycolate + H2O = glycolate + phosphate. Its pathway is organic acid metabolism; glycolate biosynthesis; glycolate from 2-phosphoglycolate: step 1/1. Specifically catalyzes the dephosphorylation of 2-phosphoglycolate. Is involved in the dissimilation of the intracellular 2-phosphoglycolate formed during the DNA repair of 3'-phosphoglycolate ends, a major class of DNA lesions induced by oxidative stress. In Shigella boydii serotype 4 (strain Sb227), this protein is Phosphoglycolate phosphatase.